The following is a 303-amino-acid chain: tRNA dimethylallyltransferase 1 (303 aa).

ATP is bound at residue 9-16 (GPTASGKT). Residue 11 to 16 (TASGKT) coordinates substrate. Interaction with substrate tRNA stretches follow at residues 34–37 (DSAL), 158–162 (QRLIR), and 239–244 (RCVGYR).

Belongs to the IPP transferase family. In terms of assembly, monomer. Mg(2+) is required as a cofactor.

It catalyses the reaction adenosine(37) in tRNA + dimethylallyl diphosphate = N(6)-dimethylallyladenosine(37) in tRNA + diphosphate. Functionally, catalyzes the transfer of a dimethylallyl group onto the adenine at position 37 in tRNAs that read codons beginning with uridine, leading to the formation of N6-(dimethylallyl)adenosine (i(6)A). The chain is tRNA dimethylallyltransferase 1 from Shewanella sediminis (strain HAW-EB3).